An 890-amino-acid polypeptide reads, in one-letter code: Receptor like protein 23 (890 aa).

Positions 1–22 (MSKALLHLHFLSLFLLCCVCHS) are cleaved as a signal peptide. The Extracellular portion of the chain corresponds to 23–850 (SIFTLNFHFT…EEEEEVLNGR (828 aa)). Asparagine 58, asparagine 70, asparagine 91, asparagine 109, and asparagine 145 each carry an N-linked (GlcNAc...) asparagine glycan. 27 LRR repeats span residues 97–121 (FHQL…GFGN), 123–145 (KRLE…SFSN), 146–171 (LTML…GLRK), 173–195 (IVLD…LFEL), 196–218 (HQLR…KFGN), 220–243 (HRLE…ISNL), 244–268 (TRLT…NLTN), 270–290 (YELD…LLTL), 291–316 (PFLA…STSS), 318–339 (LEIM…ISKL), 340–363 (INLK…LFSS), 364–389 (LKSL…SYIP), 391–411 (TLEM…ILKT), 412–436 (LKEL…LWSL), 438–461 (LLQS…ILVN), 462–485 (SSVL…PLSI), 487–506 (GFGV…ICNR), 507–527 (SSLA…PPCL), 528–551 (RNLE…LCDG), 553–575 (SLRT…FVNC), 577–598 (SLKF…WLKA), 599–623 (LPNL…HQGP), 626–650 (FPEL…YFVN), 699–724 (LTSY…GLLK), 726–747 (LIAV…MANL), 748–771 (ENLE…LGSI), and 773–796 (FLAY…QITG). N-linked (GlcNAc...) asparagine glycosylation is found at asparagine 189, asparagine 207, asparagine 242, and asparagine 265. A glycan (N-linked (GlcNAc...) asparagine) is linked at asparagine 311. N-linked (GlcNAc...) asparagine glycosylation is present at asparagine 351. Residue asparagine 461 is glycosylated (N-linked (GlcNAc...) asparagine). N-linked (GlcNAc...) asparagine glycans are attached at residues asparagine 505 and asparagine 518. A glycan (N-linked (GlcNAc...) asparagine) is linked at asparagine 574. A glycan (N-linked (GlcNAc...) asparagine) is linked at asparagine 730. Asparagine 778 is a glycosylation site (N-linked (GlcNAc...) asparagine). Residues 851–871 (AVAIGYGSGLLLGLAIAQVIA) form a helical membrane-spanning segment. Topologically, residues 872-890 (SYKPEWLVKIIGLNKRRKR) are cytoplasmic.

This sequence belongs to the RLP family. As to quaternary structure, directly interacts with a 20-mer fragment (nlp20) from NLPs through its extracellular LRR domain. Component of a trimeric complex composed of RLP23, SOBIR1 and BAK1. BAK1 is recruited into a pre-formed RLP23-SOBIR1 complex in a ligand-dependent manner. Interacts with SOBIR1.

Its subcellular location is the cell membrane. Functionally, involved in the perception of necrosis and ethylene-inducing peptide 1-like proteins (NLPs), that act as extracellular signals mediating immune activation. Component of the RLP23-SOBIR1-BAK1 complex that mediates NLP-triggered immunity. In Arabidopsis thaliana (Mouse-ear cress), this protein is Receptor like protein 23.